The following is a 149-amino-acid chain: uncharacterized protein (149 aa).

The N-acetyltransferase domain occupies leucine 2–arginine 146.

The protein belongs to the acetyltransferase family.

This is an uncharacterized protein from Bacillus subtilis (strain 168).